Consider the following 254-residue polypeptide: 5-oxoprolinase subunit A (254 aa).

The protein belongs to the LamB/PxpA family. In terms of assembly, forms a complex composed of PxpA, PxpB and PxpC.

The enzyme catalyses 5-oxo-L-proline + ATP + 2 H2O = L-glutamate + ADP + phosphate + H(+). In terms of biological role, catalyzes the cleavage of 5-oxoproline to form L-glutamate coupled to the hydrolysis of ATP to ADP and inorganic phosphate. This chain is 5-oxoprolinase subunit A, found in Acinetobacter baumannii (strain AB307-0294).